The primary structure comprises 629 residues: Replication protein A 70 kDa DNA-binding subunit D (629 aa).

Residues Leu-112 to Ser-135 are disordered. The span at Lys-115–His-131 shows a compositional bias: basic and acidic residues. The OB DNA-binding region spans Trp-194–Glu-280. A C4-type zinc finger spans residues Cys-492–Cys-512.

Belongs to the replication factor A protein 1 family. Heterotrimer of RPA1, RPA2 and RPA3 (canonical replication protein A complex).

It localises to the nucleus. Component of the replication protein A complex (RPA) required for DNA recombination, repair and replication. The activity of RPA is mediated by single-stranded DNA binding and protein interactions. Probably involved in repair of double-strand DNA breaks (DSBs) induced by genotoxic stresses. In Arabidopsis thaliana (Mouse-ear cress), this protein is Replication protein A 70 kDa DNA-binding subunit D (RPA1D).